Reading from the N-terminus, the 1235-residue chain is Receptor-type adenylate cyclase ESAG 4 (1235 aa).

The segment at 1–20 is disordered; the sequence is MNMLHLSDRNASLAPSGGEH. The Cytoplasmic portion of the chain corresponds to 1–32; it reads MNMLHLSDRNASLAPSGGEHSLPTGGAVCRDA. A helical transmembrane segment spans residues 33 to 53; it reads MDILPVILRAPVALLLLLVVL. Topologically, residues 54–858 are extracellular; that stretch reads PQLSVGAEAN…SNAGRISGAS (805 aa). Residues N63, N90, N97, N362, N531, N566, N705, and N830 are each glycosylated (N-linked (GlcNAc...) asparagine). The helical transmembrane segment at 859-879 threads the bilayer; that stretch reads LVGIIIGGALALFLVVALGVV. Residues 880–1235 are Cytoplasmic-facing; that stretch reads PYFFLRNTVI…VSSQVEERLL (356 aa). A Guanylate cyclase domain is found at 900–1054; the sequence is TLIFTDIESS…RTSNMAARTE (155 aa). Mg(2+) contacts are provided by D905 and D948.

The protein belongs to the adenylyl cyclase class-3 family. Mg(2+) is required as a cofactor.

It is found in the membrane. It carries out the reaction ATP = 3',5'-cyclic AMP + diphosphate. Functionally, could act as a receptor for an unknown ligand. This chain is Receptor-type adenylate cyclase ESAG 4 (ESAG4), found in Trypanosoma brucei brucei.